A 134-amino-acid polypeptide reads, in one-letter code: MNPLVYFSSSSQNTHRFVEKLELPAIRIPIAGTREKLRVEQPYILLVPSYGGGSPVGAVPIQVIRFLNDPHNRSLIRGVIAAGNTNFGDAYCLAGKIISQKCQVPYLYRFELLGTAEDVVNVRKGVTEFWQRQN.

It belongs to the NrdI family.

Probably involved in ribonucleotide reductase function. The polypeptide is Protein NrdI (Yersinia enterocolitica serotype O:8 / biotype 1B (strain NCTC 13174 / 8081)).